The following is a 291-amino-acid chain: Beta-lactamase CTX-M-25 (291 aa).

The first 30 residues, 1 to 30 (MMRKSVRRAMLMTTACVSLLLASVPLCAQA), serve as a signal peptide directing secretion. Catalysis depends on Ser73, which acts as the Nucleophile; acyl-ester intermediate. 4 residues coordinate a beta-lactam: Lys76, Ser133, Glu169, and Ser240.

This sequence belongs to the class-A beta-lactamase family. As to quaternary structure, monomer.

It is found in the secreted. It carries out the reaction a beta-lactam + H2O = a substituted beta-amino acid. With respect to regulation, inhibited by the beta-lactamase-blocking agents clavulanic acid and tazobactam; in the DH10B strain. Extended-spectrum beta-lactamase (ESBL) which confers resistance to penicillins, as well as first, second and third-generation cephalosporins. Has cefotaxime-hydrolyzing activity. Inactive against cephalosporin antibiotic, cefoxitin, and the carbapenem, imipenem. This chain is Beta-lactamase CTX-M-25, found in Escherichia coli.